We begin with the raw amino-acid sequence, 448 residues long: Homogentisate 1,2-dioxygenase (448 aa).

The active-site Proton acceptor is histidine 303. Fe cation contacts are provided by histidine 346 and glutamate 352. Homogentisate contacts are provided by tyrosine 361 and histidine 382. Residue histidine 382 coordinates Fe cation.

It belongs to the homogentisate dioxygenase family. In terms of assembly, hexamer; dimer of trimers. Fe cation serves as cofactor.

The enzyme catalyses homogentisate + O2 = 4-maleylacetoacetate + H(+). It participates in amino-acid degradation; L-phenylalanine degradation; acetoacetate and fumarate from L-phenylalanine: step 4/6. Involved in the catabolism of homogentisate (2,5-dihydroxyphenylacetate or 2,5-OH-PhAc), a central intermediate in the degradation of phenylalanine and tyrosine. Catalyzes the oxidative ring cleavage of the aromatic ring of homogentisate to yield maleylacetoacetate. The sequence is that of Homogentisate 1,2-dioxygenase from Rhodopseudomonas palustris (strain TIE-1).